A 2327-amino-acid chain; its full sequence is Voltage-dependent N-type calcium channel subunit alpha-1B (2327 aa).

Residues 1–37 (MVRFGDELGGRYGGTGGGERARGGGAGGAGGPGQGGL) are disordered. At 1 to 90 (MVRFGDELGG…DNVVRKYAKR (90 aa)) the chain is on the cytoplasmic side. Over residues 10–37 (GRYGGTGGGERARGGGAGGAGGPGQGGL) the composition is skewed to gly residues. The residue at position 22 (Arg22) is an Omega-N-methylarginine. One copy of the I repeat lies at 82–359 (NVVRKYAKRI…LVLGVLSGEF (278 aa)). The chain crosses the membrane as a helical span at residues 91–114 (ITEWPPFEYMILATIIANCIVLAL). Over 115–131 (EQHLPDGDKTPMSERLD) the chain is Extracellular. Residues 132 to 152 (DTEPYFIGIFCFEAGIKIIAL) traverse the membrane as a helical segment. At 153–163 (GFVFHKGSYLR) the chain is on the cytoplasmic side. A helical membrane pass occupies residues 164-182 (NGWNVMDFVVVLTGILATA). Topologically, residues 183–187 (GTDFD) are extracellular. The helical transmembrane segment at 188 to 211 (LRTLRAVRVLRPLKLVSGIPSLQV) threads the bilayer. At 212–221 (VLKSIMKAMV) the chain is on the cytoplasmic side. The helical transmembrane segment at 222-244 (PLLQIGLLLFFAILMFAIIGLEF) threads the bilayer. Topologically, residues 245–331 (YMGKFHKACF…NTNDAAGNTW (87 aa)) are extracellular. N-linked (GlcNAc...) asparagine glycosylation occurs at Asn256. Residues 332–356 (NWLYFIPLIIIGSFFMLNLVLGVLS) traverse the membrane as a helical segment. Topologically, residues 357-482 (GEFAKERERV…FFIRRMVKAQ (126 aa)) are cytoplasmic. The interval 379 to 396 (QQIERELNGYLEWIFKAE) is binding to the beta subunit. The residue at position 411 (Ser411) is a Phosphoserine. An ATP-binding site is contributed by 451–458 (ASLKSGKT). Residues 468 to 712 (EKMFRFFIRR…VFLAIAVDNL (245 aa)) form an II repeat. The helical transmembrane segment at 483–501 (SFYWVVLCVVALNTLCVAM) threads the bilayer. At 502 to 511 (VHYNQPQRLT) the chain is on the extracellular side. A helical membrane pass occupies residues 512-534 (TALYFAEFVFLGLFLTEMSLKMY). At 535 to 544 (GLGPRSYFRS) the chain is on the cytoplasmic side. Residue Ser544 coordinates a 1,2-diacyl-sn-glycero-3-phospho-(1D-myo-inositol-4,5-bisphosphate). A helical transmembrane segment spans residues 545 to 566 (SFNCFDFGVIVGSIFEVVWAAI). Over 567-573 (KPGTSFG) the chain is Extracellular. The helical transmembrane segment at 574 to 586 (ISVLRALRLLRIF) threads the bilayer. Residues Arg584 and Lys587 each contribute to the a 1,2-diacyl-sn-glycero-3-phospho-(1D-myo-inositol-4,5-bisphosphate) site. Residues 587–604 (KVTKYWNSLRNLVVSLLN) lie on the Cytoplasmic side of the membrane. Residues 605–630 (SMKSIISLLFLLFLFIVVFALLGMQL) form a helical membrane-spanning segment. Topologically, residues 631–682 (FGGQFNFQDETPTTNFDTFPAAILTVFQILTGEDWNAVMYHGIESQGGVSKG) are extracellular. The helical transmembrane segment at 683–709 (MFSSFYFIVLTLFGNYTLLNVFLAIAV) threads the bilayer. Topologically, residues 710–1140 (DNLANAQELT…FCHYIVTMRY (431 aa)) are cytoplasmic. Phosphoserine occurs at positions 745, 748, and 783. Disordered regions lie at residues 802 to 1015 (TRHV…KEPH) and 1042 to 1066 (EQPE…PSTT). Basic and acidic residues-rich tracts occupy residues 805 to 826 (VRPD…RDGL), 869 to 885 (EQDR…EERA), 914 to 924 (GSPEEATEREP), 961 to 972 (GPREAENNEEPT), and 988 to 1015 (PERE…KEPH). The span at 1050-1066 (QRNVTRMGSQPSDPSTT) shows a compositional bias: polar residues. A Phosphoserine modification is found at Ser1058. An III repeat occupies 1126 to 1412 (NLLRRFCHYI…IFVALIIITF (287 aa)). Residues 1141–1159 (FEMVILVVIALSSIALAAE) traverse the membrane as a helical segment. The Extracellular segment spans residues 1160–1167 (DPVRTDSF). A helical transmembrane segment spans residues 1168–1192 (RNNALKYMDYIFTGVFTFEMVIKMI). Residues 1193-1206 (DLGLLLHPGAYFRD) are Cytoplasmic-facing. A helical transmembrane segment spans residues 1207–1231 (LWNILDFIVVSGALVAFAFSSFMGG). The Extracellular segment spans residues 1232–1237 (SKGKDI). The chain crosses the membrane as a helical span at residues 1238–1258 (NTIKSLRVLRVLRPLKTIKRL). Topologically, residues 1259–1276 (PKLKAVFDCVVNSLKNVL) are cytoplasmic. A helical membrane pass occupies residues 1277 to 1296 (NILIVYMLFMFIFAVIAVQL). The Extracellular segment spans residues 1297 to 1383 (FKGKFFYCTD…EQGPSPGFRM (87 aa)). The helical transmembrane segment at 1384 to 1409 (ELSIFYVVYFVVFPFFFVNIFVALII) threads the bilayer. Topologically, residues 1410–1464 (ITFQEQGDKVMSECSLEKNERACIDFAISAKPLTRYMPQNKQSFQYKTWTFVVSP) are cytoplasmic. Residues 1449–1702 (NKQSFQYKTW…LFVAVIMDNF (254 aa)) form an IV repeat. A helical transmembrane segment spans residues 1465-1483 (PFEYFIMAMIALNTVVLMM). Over 1484 to 1491 (KFYDAPYE) the chain is Extracellular. A helical transmembrane segment spans residues 1492-1516 (YELMLKCLNIVFTSMFSMECILKII). The Cytoplasmic segment spans residues 1517 to 1526 (AFGVLNYFRD). The helical transmembrane segment at 1527–1548 (AWNVFDFVTVLGSITDILVTEI) threads the bilayer. Residues 1549–1554 (ANNFIN) lie on the Extracellular side of the membrane. The N-linked (GlcNAc...) asparagine glycan is linked to Asn1554. The helical transmembrane segment at 1555-1573 (LSFLRLFRAARLIKLLRQG) threads the bilayer. Topologically, residues 1574 to 1592 (YTIRILLWTFVQSFKALPY) are cytoplasmic. Residues 1593 to 1612 (VCLLIAMLFFIYAIIGMQVF) traverse the membrane as a helical segment. Topologically, residues 1613-1674 (GNIALDDDTS…ANASECGSDF (62 aa)) are extracellular. The N-linked (GlcNAc...) asparagine glycan is linked to Asn1666. The chain crosses the membrane as a helical span at residues 1675–1698 (AYFYFVSFIFLCSFLMLNLFVAVI). Residues 1699-2327 (MDNFEYLTRD…YHHPDQDHWC (629 aa)) lie on the Cytoplasmic side of the membrane. The region spanning 1715-1750 (HHLDEFIRVWAEYDPAACGRISYNDMFEMLKHMSPP) is the EF-hand domain. 3 residues coordinate Ca(2+): Asp1728, Arg1734, and Asp1739. Residues 1972–2193 (TLRGPDGEPQ…TPRPSITYKT (222 aa)) are disordered. Residues 2039 to 2053 (SHHHHHRCHRRRDKK) show a composition bias toward basic residues. Residue Ser2056 is modified to Phosphoserine. Positions 2088–2104 (CRRDRKQERGRSQERRQ) are enriched in basic and acidic residues. Polar residues-rich tracts occupy residues 2131 to 2141 (PSLSSHPTSPT) and 2152 to 2168 (GSGS…SGAS). 3 positions are modified to phosphoserine: Ser2212, Ser2221, and Ser2244. Disordered stretches follow at residues 2230–2249 (EPLS…PYLG) and 2273–2292 (ATNS…TSQS). A compositionally biased stretch (low complexity) spans 2276 to 2292 (SGRSSRTSYVSSLTSQS).

It belongs to the calcium channel alpha-1 subunit (TC 1.A.1.11) family. CACNA1B subfamily. Multisubunit complex consisting of alpha-1, alpha-2, beta and delta subunits in a 1:1:1:1 ratio. The channel activity is directed by the pore-forming and voltage-sensitive alpha-1 subunit. In many cases, this subunit is sufficient to generate voltage-sensitive calcium channel activity. The auxiliary subunits beta and alpha-2/delta linked by a disulfide bridge regulate the channel activity. Interacts with RIMS1. Interacts with FMR1 (via C-terminus); this interaction induces a decrease in the number of presynaptic functional CACNA1B channels at the cell surface. In terms of processing, phosphorylated in vitro by CaM-kinase II, PKA, PKC and CGPK. Widespread expression throughout the brain. Highest levels in pyramidal cell layers C1, C2 and C3 of the hippocampus, in the dentate gyrus, in the cortex layers 2 et 4, in the subiculum and the habenula.

It localises to the membrane. The enzyme catalyses Ca(2+)(in) = Ca(2+)(out). Is specifically blocked by omega-conotoxin GVIA. Is specifically blocked by omega-conotoxin MVIIA (ziconotide). Is insensitive to dihydropyridines (DHP). Functionally, voltage-sensitive calcium channels (VSCC) mediate the entry of calcium ions into excitable cells and are also involved in a variety of calcium-dependent processes, including muscle contraction, hormone or neurotransmitter release, gene expression, cell motility, cell division and cell death. This alpha-1B subunit gives rise to N-type calcium currents. N-type calcium channels belong to the 'high-voltage activated' (HVA) group. They are involved in pain signaling. Calcium channels containing alpha-1B subunit may play a role in directed migration of immature neurons. Mediates Ca(2+) release probability at hippocampal neuronal soma and synaptic terminals. The protein is Voltage-dependent N-type calcium channel subunit alpha-1B (Cacna1b) of Mus musculus (Mouse).